Reading from the N-terminus, the 64-residue chain is Large ribosomal subunit protein bL32 (64 aa).

The segment covering 1–16 (MAVPKHRKSKAKKRSR) has biased composition (basic residues). A disordered region spans residues 1–22 (MAVPKHRKSKAKKRSRQAANDK).

This sequence belongs to the bacterial ribosomal protein bL32 family.

The protein is Large ribosomal subunit protein bL32 of Brachyspira hyodysenteriae (strain ATCC 49526 / WA1).